Here is a 181-residue protein sequence, read N- to C-terminus: Translation initiation factor IF-3 (181 aa).

Belongs to the IF-3 family. As to quaternary structure, monomer.

It is found in the cytoplasm. Its function is as follows. IF-3 binds to the 30S ribosomal subunit and shifts the equilibrium between 70S ribosomes and their 50S and 30S subunits in favor of the free subunits, thus enhancing the availability of 30S subunits on which protein synthesis initiation begins. In Cereibacter sphaeroides (strain ATCC 17023 / DSM 158 / JCM 6121 / CCUG 31486 / LMG 2827 / NBRC 12203 / NCIMB 8253 / ATH 2.4.1.) (Rhodobacter sphaeroides), this protein is Translation initiation factor IF-3.